Consider the following 714-residue polypeptide: Hormonally up-regulated neu tumor-associated kinase (714 aa).

Over residues 1–15 the composition is skewed to low complexity; sequence MPAAAGDGLLGEPAA. The tract at residues 1–26 is disordered; the sequence is MPAAAGDGLLGEPAAPGGGGGAEDAA. Positions 62 to 320 constitute a Protein kinase domain; that stretch reads LIGSRKLGEG…IQQALANRWL (259 aa). ATP contacts are provided by residues 68-76 and Lys91; that span reads LGEGSFAKV. The Proton acceptor role is filled by Asp186. The span at 437–461 shows a compositional bias: basic and acidic residues; that stretch reads KKPKEQEKRGDFLHRPFSKKLDKNL. Disordered regions lie at residues 437-471, 518-552, and 590-660; these read KKPKEQEKRGDFLHRPFSKKLDKNLPSHKQPSGSL, MEFIPVPPPRTPRIVKKPEPHQPGPGSTGIPHKED, and ARRN…VKSR. Positions 599–611 are enriched in low complexity; the sequence is LSPGLPSGSMSPL. A compositionally biased stretch (basic and acidic residues) spans 623–635; it reads AHEDKNSPPKEEG.

It belongs to the protein kinase superfamily. CAMK Ser/Thr protein kinase family. SNF1 subfamily.

It carries out the reaction L-seryl-[protein] + ATP = O-phospho-L-seryl-[protein] + ADP + H(+). It catalyses the reaction L-threonyl-[protein] + ATP = O-phospho-L-threonyl-[protein] + ADP + H(+). This chain is Hormonally up-regulated neu tumor-associated kinase (HUNK), found in Pan troglodytes (Chimpanzee).